Here is a 448-residue protein sequence, read N- to C-terminus: ATP-dependent protease ATPase subunit HslU (448 aa).

ATP is bound by residues isoleucine 18, 60-65, aspartate 261, glutamate 326, and arginine 398; that span reads GVGKTE.

The protein belongs to the ClpX chaperone family. HslU subfamily. A double ring-shaped homohexamer of HslV is capped on each side by a ring-shaped HslU homohexamer. The assembly of the HslU/HslV complex is dependent on binding of ATP.

The protein localises to the cytoplasm. In terms of biological role, ATPase subunit of a proteasome-like degradation complex; this subunit has chaperone activity. The binding of ATP and its subsequent hydrolysis by HslU are essential for unfolding of protein substrates subsequently hydrolyzed by HslV. HslU recognizes the N-terminal part of its protein substrates and unfolds these before they are guided to HslV for hydrolysis. The chain is ATP-dependent protease ATPase subunit HslU from Paraburkholderia phytofirmans (strain DSM 17436 / LMG 22146 / PsJN) (Burkholderia phytofirmans).